The sequence spans 354 residues: Phenylalanine 4-monooxygenase, chloroplastic (354 aa).

A chloroplast-targeting transit peptide spans 1–60; it reads MAFPLQKTFLCSNGQSFPCSNGRSTSTLLASDLKFQRLNKPFILRVGSMQIRNSPKEHPR. Fe cation is bound by residues His-229, His-234, and Glu-274.

Belongs to the biopterin-dependent aromatic amino acid hydroxylase family. As to quaternary structure, forms monomers. Requires Fe(2+) as cofactor.

The protein resides in the plastid. It localises to the chloroplast. The catalysed reaction is (6R)-L-erythro-5,6,7,8-tetrahydrobiopterin + L-phenylalanine + O2 = (4aS,6R)-4a-hydroxy-L-erythro-5,6,7,8-tetrahydrobiopterin + L-tyrosine. In terms of biological role, catalyzes the hydroxylation of L-phenylalanine to L-tyrosine. Does not seem to be tetrahydropterin-dependent and shows preference for 10-formyltetrahydrofolate as cosubstrate and electron donor. This chain is Phenylalanine 4-monooxygenase, chloroplastic, found in Pinus taeda (Loblolly pine).